The sequence spans 198 residues: B9 domain-containing protein 1 (198 aa).

Residues 8 to 126 (FLLNVSGQIE…TIPMFVPESS (119 aa)) enclose the C2 B9-type domain.

This sequence belongs to the B9D family. As to quaternary structure, part of the tectonic-like complex (also named B9 complex).

It is found in the cytoplasm. The protein localises to the cytoskeleton. Its subcellular location is the cilium basal body. Functionally, component of the tectonic-like complex, a complex localized at the transition zone of primary cilia and acting as a barrier that prevents diffusion of transmembrane proteins between the cilia and plasma membranes. Required for ciliogenesis and sonic hedgehog/SHH signaling. The polypeptide is B9 domain-containing protein 1 (b9d1) (Xenopus laevis (African clawed frog)).